A 99-amino-acid chain; its full sequence is Ubiquitin-related modifier 1 homolog (99 aa).

A 1-thioglycine modification is found at Gly99. A Glycyl lysine isopeptide (Gly-Lys) (interchain with K-? in acceptor proteins) cross-link involves residue Gly99.

Belongs to the URM1 family. Interacts with cer. In terms of processing, C-terminal thiocarboxylation occurs in 2 steps, it is first acyl-adenylated (-COAMP) via the hesA/moeB/thiF part of the MOCS3 homolog, then thiocarboxylated (-COSH) via the rhodanese domain of the MOCS3 homolog.

The protein localises to the cytoplasm. It functions in the pathway tRNA modification; 5-methoxycarbonylmethyl-2-thiouridine-tRNA biosynthesis. Its function is as follows. Acts as a sulfur carrier required for 2-thiolation of mcm(5)S(2)U at tRNA wobble positions of cytosolic tRNA(Lys), tRNA(Glu) and tRNA(Gln). Serves as sulfur donor in tRNA 2-thiolation reaction by being thiocarboxylated (-COSH) at its C-terminus by MOCS3. The sulfur is then transferred to tRNA to form 2-thiolation of mcm(5)S(2)U. Also acts as a ubiquitin-like protein (UBL) that is covalently conjugated via an isopeptide bond to lysine residues of target proteins such as Prx2/Jafrac1, Ciao1, Eip71CD and GILT1. The thiocarboxylated form serves as substrate for conjugation and oxidative stress specifically induces the formation of UBL-protein conjugates. The chain is Ubiquitin-related modifier 1 homolog from Drosophila virilis (Fruit fly).